We begin with the raw amino-acid sequence, 460 residues long: Protein unc-93 homolog A (460 aa).

Helical transmembrane passes span 7-27 (ILIVSFGFLLLFTAFGGLQSL), 41-61 (SLSVIYAALIVSSVFVPPIVI), 68-88 (WTIVASMCCYITYSLGNFYAS), 89-109 (WYTLIPTSLILGFGGAPLWAA), and 139-159 (LFFLIFQSSGVWGNLISSLIF). 2 N-linked (GlcNAc...) asparagine glycosylation sites follow: Asn168 and Asn189. 6 consecutive transmembrane segments (helical) span residues 203–223 (TLLGVYTGSGVLAVILIAVFL), 292–312 (FVGYVMICFAATNAVCSLLFG), 321–341 (ICLFILAAVSNAACVIALLLW), 345–365 (PNDFAVFFIFPAIWGMADAIW), 390–410 (LWESLGFVIAYGYSTFLCVSV), and 412–432 (LYILLAVLLIAIVFYGFVEYL).

This sequence belongs to the unc-93 family.

It is found in the membrane. This Xenopus laevis (African clawed frog) protein is Protein unc-93 homolog A (unc93a).